Reading from the N-terminus, the 656-residue chain is F-box/LRR-repeat protein 10 (656 aa).

Residues Glu20–Asn66 enclose the F-box domain. LRR repeat units follow at residues Asn71–Cys96, Cys120–Ser145, Gly151–Phe176, Ser194–Gly221, Val243–Asp268, Val277–Arg301, Phe310–Gly335, Phe336–His361, Gly362–Arg387, Cys388–Gly412, Cys413–Gly437, Asp439–Gly463, Cys464–Asn491, Leu492–Glu517, Cys518–Asp551, and Cys552–Gly578. Residues Ile632 to Asp656 are disordered.

The sequence is that of F-box/LRR-repeat protein 10 (FBL10) from Arabidopsis thaliana (Mouse-ear cress).